The chain runs to 61 residues: Insect toxin BsIT2 (61 aa).

The LCN-type CS-alpha/beta domain occupies 1–61 (DGYIKKSKGC…RWKYETKTCK (61 aa)). 4 cysteine pairs are disulfide-bonded: C10/C60, C14/C35, C21/C42, and C25/C44.

This sequence belongs to the long (4 C-C) scorpion toxin superfamily. Sodium channel inhibitor family. Beta subfamily. Expressed by the venom gland.

The protein localises to the secreted. In terms of biological role, depressant insect beta-toxins cause a transient contraction paralysis followed by a slow flaccid paralysis. They bind voltage-independently at site-4 of sodium channels (Nav) and shift the voltage of activation toward more negative potentials thereby affecting sodium channel activation and promoting spontaneous and repetitive firing. This toxin is active only on insects. This Hottentotta tamulus sindicus (Scorpion) protein is Insect toxin BsIT2.